A 429-amino-acid polypeptide reads, in one-letter code: Enolase (429 aa).

(2R)-2-phosphoglycerate is bound at residue Gln168. Catalysis depends on Glu210, which acts as the Proton donor. Asp247, Glu288, and Asp315 together coordinate Mg(2+). Residues Lys340, Arg369, Ser370, and Lys391 each contribute to the (2R)-2-phosphoglycerate site. Residue Lys340 is the Proton acceptor of the active site.

The protein belongs to the enolase family. The cofactor is Mg(2+).

Its subcellular location is the cytoplasm. The protein localises to the secreted. It is found in the cell surface. It catalyses the reaction (2R)-2-phosphoglycerate = phosphoenolpyruvate + H2O. It functions in the pathway carbohydrate degradation; glycolysis; pyruvate from D-glyceraldehyde 3-phosphate: step 4/5. Functionally, catalyzes the reversible conversion of 2-phosphoglycerate (2-PG) into phosphoenolpyruvate (PEP). It is essential for the degradation of carbohydrates via glycolysis. The polypeptide is Enolase (Nostoc sp. (strain PCC 7120 / SAG 25.82 / UTEX 2576)).